The sequence spans 172 residues: Adenine phosphoribosyltransferase (172 aa).

The protein belongs to the purine/pyrimidine phosphoribosyltransferase family. Homodimer.

It is found in the cytoplasm. It carries out the reaction AMP + diphosphate = 5-phospho-alpha-D-ribose 1-diphosphate + adenine. Its pathway is purine metabolism; AMP biosynthesis via salvage pathway; AMP from adenine: step 1/1. Functionally, catalyzes a salvage reaction resulting in the formation of AMP, that is energically less costly than de novo synthesis. This Streptococcus mutans serotype c (strain ATCC 700610 / UA159) protein is Adenine phosphoribosyltransferase.